The chain runs to 103 residues: Glutaredoxin-C11 (103 aa).

The region spanning 1–102 (MERIRDLSSK…QMLKDAKAIW (102 aa)) is the Glutaredoxin domain. Cys21 and Cys24 are joined by a disulfide.

This sequence belongs to the glutaredoxin family. CC-type subfamily.

The protein resides in the cytoplasm. Functionally, has a glutathione-disulfide oxidoreductase activity in the presence of NADPH and glutathione reductase. Reduces low molecular weight disulfides and proteins. This Arabidopsis thaliana (Mouse-ear cress) protein is Glutaredoxin-C11 (GRXC11).